We begin with the raw amino-acid sequence, 575 residues long: Proline--tRNA ligase, cytoplasmic (575 aa).

The protein belongs to the class-II aminoacyl-tRNA synthetase family.

The protein resides in the cytoplasm. It carries out the reaction tRNA(Pro) + L-proline + ATP = L-prolyl-tRNA(Pro) + AMP + diphosphate. This chain is Proline--tRNA ligase, cytoplasmic (PRS), found in Candida albicans (Yeast).